Here is a 291-residue protein sequence, read N- to C-terminus: N-acetylmannosamine kinase (291 aa).

ATP contacts are provided by residues 5–12 and 132–139; these read AIDIGGTK and GVGGGVVC. Zn(2+) is bound by residues H156, C166, C168, and C173.

The protein belongs to the ROK (NagC/XylR) family. NanK subfamily. As to quaternary structure, homodimer.

It catalyses the reaction an N-acyl-D-mannosamine + ATP = an N-acyl-D-mannosamine 6-phosphate + ADP + H(+). It functions in the pathway amino-sugar metabolism; N-acetylneuraminate degradation; D-fructose 6-phosphate from N-acetylneuraminate: step 2/5. Functionally, catalyzes the phosphorylation of N-acetylmannosamine (ManNAc) to ManNAc-6-P. The polypeptide is N-acetylmannosamine kinase (Salmonella paratyphi A (strain ATCC 9150 / SARB42)).